A 418-amino-acid polypeptide reads, in one-letter code: MSLLVIGINHTSASVDLREKVAFSPEKLTKALDELKNSDAIQSGVILSTCNRTEIYCEVKHGISSGYVINWLAEFHHVALETLMPSIYIHEEQAAVKHLMRVSCGLDSLVLGEPQILGQVKKAFADAREHNAVEGTIEKLFQQDFSVAKRVRTETNIGGNAVSVAYAACTLARQIFESLSDSTVLLVGAGETIELVAKHLDDSGCKRLIVANRTRERAMGLAEQFNAEVISLPEIPEHLPKADIIISSTASPLPIIGKGMVESALKLRKHQPMLFVDIAVPRDIEGEVAELNDAYLYSVDDLQSIIDHNIEQRKIEAIQAEAIVSEESAEFMTWIRSRQAVNSIRQYRENSEAMRIELLQKSMQALASGQNPEKVLAELSNKLTNKLIHAPTLAMQQAAKNGETEKLTVIRTTIGLDN.

Residues 49–52, Ser108, 113–115, and Gln119 contribute to the substrate site; these read TCNR and EPQ. Cys50 acts as the Nucleophile in catalysis. 188-193 is an NADP(+) binding site; the sequence is GAGETI.

This sequence belongs to the glutamyl-tRNA reductase family. In terms of assembly, homodimer.

It catalyses the reaction (S)-4-amino-5-oxopentanoate + tRNA(Glu) + NADP(+) = L-glutamyl-tRNA(Glu) + NADPH + H(+). Its pathway is porphyrin-containing compound metabolism; protoporphyrin-IX biosynthesis; 5-aminolevulinate from L-glutamyl-tRNA(Glu): step 1/2. Catalyzes the NADPH-dependent reduction of glutamyl-tRNA(Glu) to glutamate 1-semialdehyde (GSA). The protein is Glutamyl-tRNA reductase of Aliivibrio fischeri (strain ATCC 700601 / ES114) (Vibrio fischeri).